The primary structure comprises 351 residues: Histidine protein kinase SaeS (351 aa).

2 helical membrane-spanning segments follow: residues 9-29 (IIIGVVSSILLTSTILAIAYI) and 40-60 (TLTLTTIITSCLTLLICSIFI). The 54-residue stretch at 61-114 (NPLIQKIKQFNIKTKQFANGNYASNDKTFNSPKEIYELNQSFNKMASEITQQMN) folds into the HAMP domain. The 220-residue stretch at 129–348 (NLAHDLKTPL…TMTVTLHKLD (220 aa)) folds into the Histidine kinase domain. H132 is subject to Phosphohistidine; by autocatalysis.

Autophosphorylated.

The protein localises to the cell membrane. The catalysed reaction is ATP + protein L-histidine = ADP + protein N-phospho-L-histidine.. In terms of biological role, member of the two-component regulatory system SaeR/SaeS involved in the regulation of staphylococcal virulence factors in a strain-dependent fashion. Probably functions as a membrane-associated protein kinase that upon sensing the appropriate signal, autophosphorylates and in turn activates the cytosolic response regulator SaeR. The sequence is that of Histidine protein kinase SaeS (saeS) from Staphylococcus aureus (strain bovine RF122 / ET3-1).